The primary structure comprises 739 residues: Exocyst complex component 3-like protein (739 aa).

Residues 1 to 370 (MDSAARDKTQ…DVSDLEPLLT (370 aa)) are mediates interaction with EXOC2, EXOC4 and EXOC5.

The protein belongs to the SEC6 family. In terms of assembly, interacts with EXOC2, EXOC4 and EXOC5; may be part of the exocyst.

Its subcellular location is the cytoplasmic vesicle. The protein resides in the secretory vesicle. Functionally, as part of the exocyst, may play a role in regulated exocytosis of insulin granules. The protein is Exocyst complex component 3-like protein (EXOC3L1) of Bos taurus (Bovine).